Consider the following 356-residue polypeptide: Nicotinate-nucleotide--dimethylbenzimidazole phosphoribosyltransferase (356 aa).

Glutamate 317 functions as the Proton acceptor in the catalytic mechanism.

This sequence belongs to the CobT family. As to quaternary structure, homodimer.

The enzyme catalyses 5,6-dimethylbenzimidazole + nicotinate beta-D-ribonucleotide = alpha-ribazole 5'-phosphate + nicotinate + H(+). It functions in the pathway nucleoside biosynthesis; alpha-ribazole biosynthesis; alpha-ribazole from 5,6-dimethylbenzimidazole: step 1/2. In terms of biological role, catalyzes the synthesis of alpha-ribazole-5'-phosphate from nicotinate mononucleotide (NAMN) and 5,6-dimethylbenzimidazole (DMB). The chain is Nicotinate-nucleotide--dimethylbenzimidazole phosphoribosyltransferase from Salmonella paratyphi A (strain AKU_12601).